Here is a 133-residue protein sequence, read N- to C-terminus: Holo-[acyl-carrier-protein] synthase (133 aa).

Mg(2+)-binding residues include Asp8 and Glu56.

This sequence belongs to the P-Pant transferase superfamily. AcpS family. Mg(2+) is required as a cofactor.

Its subcellular location is the cytoplasm. It catalyses the reaction apo-[ACP] + CoA = holo-[ACP] + adenosine 3',5'-bisphosphate + H(+). In terms of biological role, transfers the 4'-phosphopantetheine moiety from coenzyme A to a Ser of acyl-carrier-protein. The sequence is that of Holo-[acyl-carrier-protein] synthase from Clostridium perfringens (strain SM101 / Type A).